A 432-amino-acid chain; its full sequence is CinA-like protein (432 aa).

This sequence belongs to the CinA family.

This Colwellia psychrerythraea (strain 34H / ATCC BAA-681) (Vibrio psychroerythus) protein is CinA-like protein.